Reading from the N-terminus, the 531-residue chain is Calcium-dependent protein kinase 21 (531 aa).

Residues 1 to 10 (MGCFSSKHRK) show a composition bias toward basic residues. Residues 1–62 (MGCFSSKHRK…STPSSNPVSV (62 aa)) are disordered. Glycine 2 is lipidated: N-myristoyl glycine. Residues 48–60 (IHQQISTPSSNPV) are compositionally biased toward polar residues. The Protein kinase domain maps to 80 to 338 (YSLGKELGRG…AAQVLEHPWI (259 aa)). ATP contacts are provided by residues 86–94 (LGRGQFGIT) and lysine 109. The active-site Proton acceptor is the aspartate 204. The residue at position 244 (serine 244) is a Phosphoserine. The segment at 343–373 (APDKPIDSAVLSRMKQFRAMNKLKKLALKVI) is autoinhibitory domain. 4 EF-hand domains span residues 380–415 (EEIK…LGSR), 416–451 (LSET…RYKL), 452–487 (DRDE…YGMG), and 488–522 (DEAS…GSTQ). Residues aspartate 393, aspartate 395, serine 397, threonine 399, glutamate 404, aspartate 429, aspartate 431, asparagine 433, threonine 435, glutamate 440, aspartate 465, aspartate 467, serine 469, histidine 471, glutamate 476, aspartate 500, aspartate 502, aspartate 504, arginine 506, and glutamate 511 each contribute to the Ca(2+) site.

Belongs to the protein kinase superfamily. Ser/Thr protein kinase family. CDPK subfamily. Interacts with SLAC1 and ABI1.

The protein resides in the cell membrane. It carries out the reaction L-seryl-[protein] + ATP = O-phospho-L-seryl-[protein] + ADP + H(+). The enzyme catalyses L-threonyl-[protein] + ATP = O-phospho-L-threonyl-[protein] + ADP + H(+). Its activity is regulated as follows. Activated by calcium. Autophosphorylation may play an important role in the regulation of the kinase activity. Its function is as follows. May play a role in signal transduction pathways that involve calcium as a second messenger. Mediates the phosphorylation and activation of the S-type anion efflux channel SLAC1. This chain is Calcium-dependent protein kinase 21 (CPK21), found in Arabidopsis thaliana (Mouse-ear cress).